Consider the following 107-residue polypeptide: UPF0145 protein YbjQ (107 aa).

This sequence belongs to the UPF0145 family.

The polypeptide is UPF0145 protein YbjQ (Salmonella gallinarum (strain 287/91 / NCTC 13346)).